Here is a 436-residue protein sequence, read N- to C-terminus: UDP-glucuronate 4-epimerase 5 (436 aa).

2 helical membrane passes run 36-56 and 95-115; these read LTLW…LSPP and GLTV…SIAL. 97–128 provides a ligand contact to NAD(+); it reads TVLVTGASGFVGTHVSIALRRRGDGVLGLDNF. The active-site Proton acceptor is the tyrosine 247.

The protein belongs to the NAD(P)-dependent epimerase/dehydratase family. Homodimer. As to expression, in leaves, pollen and siliques, but not in roots or flowers.

Its subcellular location is the golgi apparatus. It localises to the golgi stack membrane. It catalyses the reaction UDP-alpha-D-glucuronate = UDP-alpha-D-galacturonate. Functionally, involved in the synthesis of the negatively charged monosaccharide that forms the backbone of pectic cell wall components. The polypeptide is UDP-glucuronate 4-epimerase 5 (GAE5) (Arabidopsis thaliana (Mouse-ear cress)).